Here is a 338-residue protein sequence, read N- to C-terminus: Photosystem II assembly lipoprotein Ycf48 (338 aa).

The signal sequence occupies residues 1–23 (MKKIITSFPNLLLSILLCFVLSS). Cys24 carries N-palmitoyl cysteine lipidation. A lipid anchor (S-diacylglycerol cysteine) is attached at Cys24.

Belongs to the Ycf48 family. In terms of assembly, part of early PSII assembly complexes which includes D1 (psbA) and PsbI; not found in mature PSII. Binds to the lumenal side of PSII complexes. Interacts with YidC.

The protein localises to the cellular thylakoid membrane. Its function is as follows. A factor required for optimal assembly of photosystem II (PSII), acting in the early stages of PSII assembly. Also plays a role in replacement of photodamaged D1 (psbA). Assists YidC in synthesis of chlorophyll-binding proteins. The chain is Photosystem II assembly lipoprotein Ycf48 from Prochlorococcus marinus (strain MIT 9312).